The primary structure comprises 433 residues: Protoheme IX farnesyltransferase 2 (433 aa).

Positions 1–164 (MQRFTGLVTA…LTKPRLMWLL (164 aa)) are unknown. A run of 13 helical transmembrane segments spans residues 4–24 (FTGL…LGVA), 35–55 (AVAH…AAAL), 67–87 (WGVT…MAVL), 95–115 (LHLF…TWHL), 160–180 (LMWL…VTGA), 184–204 (GVTI…AGTF), 236–256 (AFGV…VNPL), 257–277 (AAAL…VVLK), 282–304 (WNTV…AVAG), 308–330 (LPAL…NLAI), 357–377 (ILYW…VAGF), 378–398 (GPVY…TVVV), and 413–433 (HASN…TMVI). The protoheme IX prenyltransferase stretch occupies residues 165-430 (CLLALSGMAL…ALLVAILVET (266 aa)).

In the C-terminal section; belongs to the UbiA prenyltransferase family. Protoheme IX farnesyltransferase subfamily.

Its subcellular location is the cell membrane. It carries out the reaction heme b + (2E,6E)-farnesyl diphosphate + H2O = Fe(II)-heme o + diphosphate. It functions in the pathway porphyrin-containing compound metabolism; heme O biosynthesis; heme O from protoheme: step 1/1. In terms of biological role, converts heme B (protoheme IX) to heme O by substitution of the vinyl group on carbon 2 of heme B porphyrin ring with a hydroxyethyl farnesyl side group. The polypeptide is Protoheme IX farnesyltransferase 2 (ctaB2) (Natronomonas pharaonis (strain ATCC 35678 / DSM 2160 / CIP 103997 / JCM 8858 / NBRC 14720 / NCIMB 2260 / Gabara) (Halobacterium pharaonis)).